Reading from the N-terminus, the 1059-residue chain is MAGNDWLNSYLEAILDVGPGLDDAKSSLLLRERGRFSPTRYFVEEVIGFDETDLYRSWVRASSSRSPQERNTRLENMCWRIWNLARQKKQLESEAVQRVNKRRLERERGRREATADMSEDLSEGERGDPVSDVSTHGGGDSVKSRLPRISSADAMETWVNSQKGKKLYIVLISIHGLIRGENMELGRDSDTGGQVKYVVELARALGSMPGVYRVDLLTRQVSSPDVDWSYGEPTEMLAPRNTDEFGDDMGESSGAYIIRIPFGPRNKYIPKEELWPYIPEFVDGAMGHIIQMSKALGEQIGSGHAVWPVAIHGHYADAGDSAALLSGALNVPMIFTGHSLGRDKLEQLLKQGRLSTDEINSTYKIMRRIEAEELALDGTEIVITSTRQEIEEQWRLYNGFDPVLERKIRARIRRNVSCYGRYMPRMSVIPPGMEFHHIAPLDGDIETEPEGILDHPAPQDPPIWSEIMRFFSNPRKPVILALARPDPKKNITTLVKAFGECRPLRELANLTLIMGNRDGIDEMSSTSSSVLLSVLKLIDKYDLYGQVAYPKHHKQSDVPDIYRLAAKTKGVFINPAFIEPFGLTLIEAAAYGLPMVATKNGGPVDIHRVLDNGLLIDPHDEKSIADALLKLVSNKQLWAKCRQNGLKNIHLFSWPEHCKTYLSKIATCKPRHPQWQRSEDGGESSESEESPGDSLRDIQDLSLNLKFSLDGERSGDSGNDNSLDPDGNATDRTTKLENAVLSWSKGISKDTRRGGATEKSGQNSNASKFPPLRSRNRLFVIAVDCDTTSGLLEMIKLIFEAAGEERAEGSVGFILSTSLTISEIQSFLISGGLSPNDFDAYICNSGSDLYYPSLNSEDRLFVGDLYFHSHIEYRWGGEGLRKTLIRWASSITDKKSENNEQIVSPAEQLSTDYCYAFNVRKAGMAPPLKELRKLMRIQALRCHPIYCQNGTRLNVIPVLASRSQALRYLYVRWGFELSKMVVFVGECGDTDYEGLVGGLHKSVILKGVGSRAISQLHNNRNYPLSDVMPLDSPNIVQATEGSSSADIQALLEKVGYHKG.

4 disordered regions span residues 95–145, 671–695, 710–731, and 748–769; these read AVQR…VKSR, RHPQWQRSEDGGESSESEESPGDSL, DGERSGDSGNDNSLDPDGNATD, and SKDTRRGGATEKSGQNSNASKF. A compositionally biased stretch (basic and acidic residues) spans 102–114; the sequence is RRLERERGRREAT. Over residues 681-691 the composition is skewed to acidic residues; that stretch reads GGESSESEESP.

Belongs to the glycosyltransferase 1 family. As to quaternary structure, homodimer or homotetramer.

It carries out the reaction beta-D-fructose 6-phosphate + UDP-alpha-D-glucose = sucrose 6(F)-phosphate + UDP + H(+). Its pathway is glycan biosynthesis; sucrose biosynthesis; sucrose from D-fructose 6-phosphate and UDP-alpha-D-glucose: step 1/2. Its activity is regulated as follows. Activity is regulated by phosphorylation and moderated by concentration of metabolites and light. Plays a role in photosynthetic sucrose synthesis by catalyzing the rate-limiting step of sucrose biosynthesis from UDP-glucose and fructose- 6-phosphate. Involved in the regulation of carbon partitioning in the leaves of plants. May regulate the synthesis of sucrose and therefore play a major role as a limiting factor in the export of photoassimilates out of the leaf. Plays a role for sucrose availability that is essential for plant growth and fiber elongation. In Vicia faba (Broad bean), this protein is Probable sucrose-phosphate synthase (SPS).